Here is a 588-residue protein sequence, read N- to C-terminus: Sulfite reductase [NADPH] hemoprotein beta-component (588 aa).

4 residues coordinate [4Fe-4S] cluster: Cys-443, Cys-449, Cys-488, and Cys-492. Cys-492 contacts siroheme.

It belongs to the nitrite and sulfite reductase 4Fe-4S domain family. In terms of assembly, alpha(8)-beta(8). The alpha component is a flavoprotein, the beta component is a hemoprotein. Siroheme is required as a cofactor. [4Fe-4S] cluster serves as cofactor.

The catalysed reaction is hydrogen sulfide + 3 NADP(+) + 3 H2O = sulfite + 3 NADPH + 4 H(+). It functions in the pathway sulfur metabolism; hydrogen sulfide biosynthesis; hydrogen sulfide from sulfite (NADPH route): step 1/1. In terms of biological role, component of the sulfite reductase complex that catalyzes the 6-electron reduction of sulfite to sulfide. This is one of several activities required for the biosynthesis of L-cysteine from sulfate. The polypeptide is Sulfite reductase [NADPH] hemoprotein beta-component (Actinobacillus succinogenes (strain ATCC 55618 / DSM 22257 / CCUG 43843 / 130Z)).